The primary structure comprises 377 residues: Beta-lactamase (377 aa).

An N-terminal signal peptide occupies residues 1 to 19; sequence MFKTTLCALLITASCSTFA. Serine 80 (acyl-ester intermediate) is an active-site residue. Residues serine 80, glutamine 136, tyrosine 166, asparagine 168, alanine 334, and asparagine 359 each contribute to the a beta-lactam site.

Belongs to the class-C beta-lactamase family. In terms of assembly, monomer.

Its subcellular location is the periplasm. It catalyses the reaction a beta-lactam + H2O = a substituted beta-amino acid. Inhibited by the beta-lactamase-blocking agents avibactam, enmetazobactam, relebactam, nacubactam, vaborbactam, taniborbactam, zidebactam, and beta-lactam-analog boronic acids, via a covalent binding to Ser-80. Inhibited by non-beta-lactam, benzo(b)thiophene-2-boronic acid (BZBTH2B) and various cyclic boronates. Not inhibited by clavulanic acid. Inhibited by O-aryloxycarbonyl hydroxamates, via cross-linking of the active site Ser-80 to Lys-331. Weakly inhibited by citric acid. Its function is as follows. Class C beta-lactamase which confers resistance to penicillins and cephalosporins. Has benzylpenicillin- and cephaloridine-hydrolyzing activity. Has weak cefuroxime, cefotaxime, cefoxitin and oxacillin-hydrolyzing activities. The chain is Beta-lactamase from Escherichia coli (strain K12).